We begin with the raw amino-acid sequence, 105 residues long: Phosphoribosyl-AMP cyclohydrolase (105 aa).

A Mg(2+)-binding site is contributed by D72. C73 is a binding site for Zn(2+). Mg(2+) contacts are provided by D74 and D76. The Zn(2+) site is built by C89 and C96.

It belongs to the PRA-CH family. As to quaternary structure, homodimer. Mg(2+) serves as cofactor. It depends on Zn(2+) as a cofactor.

It is found in the cytoplasm. The enzyme catalyses 1-(5-phospho-beta-D-ribosyl)-5'-AMP + H2O = 1-(5-phospho-beta-D-ribosyl)-5-[(5-phospho-beta-D-ribosylamino)methylideneamino]imidazole-4-carboxamide. It functions in the pathway amino-acid biosynthesis; L-histidine biosynthesis; L-histidine from 5-phospho-alpha-D-ribose 1-diphosphate: step 3/9. Its function is as follows. Catalyzes the hydrolysis of the adenine ring of phosphoribosyl-AMP. The chain is Phosphoribosyl-AMP cyclohydrolase from Listeria monocytogenes serotype 4a (strain HCC23).